The sequence spans 685 residues: DNA topoisomerase 4 subunit B (685 aa).

Basic and acidic residues predominate over residues 389-400 (EAARKAREESRN). The disordered stretch occupies residues 389-427 (EAARKAREESRNGKKRKKGESLLSGKLTPAQSRNPKKNE). A Toprim domain is found at 426 to 540 (NELYLVEGDS…AGKVYIALPP (115 aa)). Mg(2+)-binding residues include Glu432, Asp505, and Asp507. 2 stretches are compositionally biased toward acidic residues: residues 644–654 (GSILDRSEEDT) and 673–685 (QTDD…FDIE). The disordered stretch occupies residues 644 to 685 (GSILDRSEEDTSAPTGESLLDAEKTKEAEQTDDTEISLFDIE).

The protein belongs to the type II topoisomerase family. ParE type 1 subfamily. Heterotetramer composed of ParC and ParE. The cofactor is Mg(2+). Requires Mn(2+) as cofactor. Ca(2+) serves as cofactor.

The enzyme catalyses ATP-dependent breakage, passage and rejoining of double-stranded DNA.. With respect to regulation, pyrrolopyrimidines inhibit both GyrB and its paralog in topoisomerase IV (parE). Topoisomerase IV is essential for chromosome segregation. It relaxes supercoiled DNA. Performs the decatenation events required during the replication of a circular DNA molecule. In Enterococcus faecalis (strain ATCC 700802 / V583), this protein is DNA topoisomerase 4 subunit B.